The primary structure comprises 322 residues: Nodulation protein Z (322 aa).

The GT23 domain occupies 1-314 (MYNRYVLSRR…NDPSRLVVIE (314 aa)).

This sequence belongs to the glycosyltransferase 23 family.

In terms of biological role, fucosyltransferase which adds the fucose moiety of the nod factor on its terminal reducing N-acetylglucosamine end. Uses GDP-fucose as the donor group. The polypeptide is Nodulation protein Z (nodZ) (Sinorhizobium fredii (strain NBRC 101917 / NGR234)).